A 259-amino-acid chain; its full sequence is Thiazole synthase (259 aa).

The Schiff-base intermediate with DXP role is filled by lysine 102. 1-deoxy-D-xylulose 5-phosphate is bound by residues glycine 163, alanine 189–glycine 190, and asparagine 211–threonine 212.

This sequence belongs to the ThiG family. As to quaternary structure, homotetramer. Forms heterodimers with either ThiH or ThiS.

The protein localises to the cytoplasm. The catalysed reaction is [ThiS sulfur-carrier protein]-C-terminal-Gly-aminoethanethioate + 2-iminoacetate + 1-deoxy-D-xylulose 5-phosphate = [ThiS sulfur-carrier protein]-C-terminal Gly-Gly + 2-[(2R,5Z)-2-carboxy-4-methylthiazol-5(2H)-ylidene]ethyl phosphate + 2 H2O + H(+). Its pathway is cofactor biosynthesis; thiamine diphosphate biosynthesis. Functionally, catalyzes the rearrangement of 1-deoxy-D-xylulose 5-phosphate (DXP) to produce the thiazole phosphate moiety of thiamine. Sulfur is provided by the thiocarboxylate moiety of the carrier protein ThiS. In vitro, sulfur can be provided by H(2)S. The polypeptide is Thiazole synthase (Novosphingobium aromaticivorans (strain ATCC 700278 / DSM 12444 / CCUG 56034 / CIP 105152 / NBRC 16084 / F199)).